A 632-amino-acid chain; its full sequence is Gamma-aminobutyric acid receptor subunit theta (632 aa).

The first 21 residues, 1–21, serve as a signal peptide directing secretion; it reads MGIRGMLRAAVILLLIRTWLA. Topologically, residues 22-268 are extracellular; sequence EGNYPSPIPK…FQVQREVNSY (247 aa). N-linked (GlcNAc...) asparagine glycosylation is present at Asn127. Residues Cys183 and Cys197 are joined by a disulfide bond. Residues 269–289 traverse the membrane as a helical segment; the sequence is LVQVYWPTVLTTITSWISFWM. The Cytoplasmic segment spans residues 290–297; that stretch reads NYDSSAAR. Residues 298–315 form a helical membrane-spanning segment; the sequence is VTIGLTSMLILTTIDSHL. At 316–326 the chain is on the extracellular side; the sequence is RDKLPNISCIK. The helical transmembrane segment at 327-347 threads the bilayer; that stretch reads AIDIYILVCLFFVFLSLLEYV. Topologically, residues 348 to 611 are cytoplasmic; it reads YINYLFYSRG…DYVPKVDKWS (264 aa). 2 disordered regions span residues 410 to 458 and 491 to 523; these read SPES…STSE and HGVT…LHHG. Over residues 413-425 the composition is skewed to polar residues; sequence SLGSLTSTSEQAQ. Positions 426-439 are enriched in low complexity; that stretch reads LATSESLSPLTSLS. Residues 448-458 are compositionally biased toward polar residues; sequence ESLSDLPSTSE. The span at 491–511 shows a compositional bias: basic and acidic residues; it reads HGVTHDHEDSNESLSSDERHG. The helical transmembrane segment at 612–632 threads the bilayer; it reads RFLFPLAFGLFNIVYWVYHMY.

Belongs to the ligand-gated ion channel (TC 1.A.9) family. Gamma-aminobutyric acid receptor (TC 1.A.9.5) subfamily. GABRQ sub-subfamily. Heteropentamer, formed by a combination of alpha (GABRA1-6), beta (GABRB1-3), gamma (GABRG1-3), delta (GABRD), epsilon (GABRE), rho (GABRR1-3), pi (GABRP) and theta (GABRQ) chains, each subunit exhibiting distinct physiological and pharmacological properties. As to expression, expressed in brain.

It is found in the postsynaptic cell membrane. The protein resides in the cell membrane. The catalysed reaction is chloride(in) = chloride(out). Its activity is regulated as follows. Potentiated by etomidate, propofol, pregnanolone and pentobarbital. Functionally, theta subunit of the heteropentameric ligand-gated chloride channel gated by gamma-aminobutyric acid (GABA), a major inhibitory neurotransmitter in the brain. GABA-gated chloride channels, also named GABA(A) receptors (GABAAR), consist of five subunits arranged around a central pore and contain GABA active binding site(s) located at the alpha and beta subunit interfaces. When activated by GABA, GABAARs selectively allow the flow of chloride anions across the cell membrane down their electrochemical gradient. This chain is Gamma-aminobutyric acid receptor subunit theta, found in Homo sapiens (Human).